Consider the following 183-residue polypeptide: Streptavidin-V2 (183 aa).

Positions 1-24 (MRKIVVAAIAVSLTTVGITASASA) are cleaved as a signal peptide. Positions 37-159 (AEAGITGTWY…GHDTFTKVKP (123 aa)) constitute an Avidin-like domain. Biotin contacts are provided by Y67 and Y78. A Cell attachment site; atypical motif is present at residues 83 to 85 (RYD). The biotin site is built by W116, W132, and W144.

The protein belongs to the avidin/streptavidin family. In terms of assembly, homotetramer.

The protein resides in the secreted. Functionally, the biological function of streptavidin is not known. Forms a strong non-covalent specific complex with biotin (one molecule of biotin per subunit of streptavidin). The polypeptide is Streptavidin-V2 (Streptomyces violaceus (Streptomyces venezuelae)).